We begin with the raw amino-acid sequence, 353 residues long: Uroporphyrinogen decarboxylase (353 aa).

Residues 33 to 37 (RQAGR), Asp-82, Tyr-158, Ser-213, and His-332 contribute to the substrate site.

It belongs to the uroporphyrinogen decarboxylase family. As to quaternary structure, homodimer.

Its subcellular location is the cytoplasm. It carries out the reaction uroporphyrinogen III + 4 H(+) = coproporphyrinogen III + 4 CO2. The protein operates within porphyrin-containing compound metabolism; protoporphyrin-IX biosynthesis; coproporphyrinogen-III from 5-aminolevulinate: step 4/4. Functionally, catalyzes the decarboxylation of four acetate groups of uroporphyrinogen-III to yield coproporphyrinogen-III. This Gluconobacter oxydans (strain 621H) (Gluconobacter suboxydans) protein is Uroporphyrinogen decarboxylase.